The chain runs to 230 residues: Cytidylate kinase (230 aa).

Residue 10-18 (GPAGSGKST) coordinates ATP.

Belongs to the cytidylate kinase family. Type 1 subfamily.

It localises to the cytoplasm. It carries out the reaction CMP + ATP = CDP + ADP. It catalyses the reaction dCMP + ATP = dCDP + ADP. This chain is Cytidylate kinase, found in Leptospira borgpetersenii serovar Hardjo-bovis (strain L550).